The chain runs to 466 residues: Probable periplasmic serine protease do/HhoA-like (466 aa).

A signal peptide spans 1–29; it reads MKKTRFVLNSIALGLSVLSTSFVAHVAQA. Residues H120, D150, and S226 each act as charge relay system in the active site. 2 PDZ domains span residues 270-361 and 367-458; these read ILEF…LRDG and KMKL…LRGD.

The protein belongs to the peptidase S1C family.

The protein resides in the periplasm. This Haemophilus influenzae (strain ATCC 51907 / DSM 11121 / KW20 / Rd) protein is Probable periplasmic serine protease do/HhoA-like.